The chain runs to 226 residues: Ribonuclease T (226 aa).

The region spanning 20–194 (VVIDVETAGF…YDTERTAELF (175 aa)) is the Exonuclease domain. Mg(2+) contacts are provided by Asp-23, Glu-25, His-181, and Asp-186. Residue His-181 is the Proton donor/acceptor of the active site.

The protein belongs to the RNase T family. In terms of assembly, homodimer. Mg(2+) serves as cofactor.

In terms of biological role, trims short 3' overhangs of a variety of RNA species, leaving a one or two nucleotide 3' overhang. Responsible for the end-turnover of tRNA: specifically removes the terminal AMP residue from uncharged tRNA (tRNA-C-C-A). Also appears to be involved in tRNA biosynthesis. The chain is Ribonuclease T from Shewanella denitrificans (strain OS217 / ATCC BAA-1090 / DSM 15013).